Here is a 434-residue protein sequence, read N- to C-terminus: Protein trichome birefringence-like 3 (434 aa).

Residues 15–35 (IPLSIIVLVLCGFMFFILLYT) form a helical; Signal-anchor for type II membrane protein membrane-spanning segment. A GDS motif motif is present at residues 166–168 (GDS). The short motif at 413–427 (DCIHWCLPGLPDTWN) is the DCXHWCLPGXXDXWN motif element.

The protein belongs to the PC-esterase family. TBL subfamily.

The protein resides in the golgi apparatus membrane. In terms of biological role, involved in secondary cell wall cellulose deposition. Required for normal stem development. May act as a bridging protein that binds pectin and other cell wall polysaccharides. Probably involved in maintaining esterification of pectins. May be involved in the specific O-acetylation of cell wall polymers. The chain is Protein trichome birefringence-like 3 (TBL3) from Arabidopsis thaliana (Mouse-ear cress).